Reading from the N-terminus, the 54-residue chain is Photoreceptor disk component PRCD (54 aa).

C2 carries the S-palmitoyl cysteine lipid modification. The interval 24 to 54 (QPEPSGADGAVVGSRSERDLQSSGRKEEPLK) is disordered. A compositionally biased stretch (basic and acidic residues) spans 38-54 (RSERDLQSSGRKEEPLK).

Belongs to the PRCD family. Interacts with RHO/rhodopsin; the interaction promotes PRCD stability. Post-translationally, palmitoylated at Cys-2. Palmitoylation is essential for protein stability and trafficking to the photoreceptor outer segment, but does not appear to be essential for membrane localization. Probably palmitoylated by ZDHHC3. Phosphorylated. As to expression, expressed in retina.

It is found in the cell projection. The protein localises to the cilium. Its subcellular location is the photoreceptor outer segment. The protein resides in the membrane. It localises to the endoplasmic reticulum. It is found in the golgi apparatus. Involved in vision. The protein is Photoreceptor disk component PRCD of Canis lupus familiaris (Dog).